The sequence spans 319 residues: Ribonucleoside-diphosphate reductase small chain (319 aa).

Fe cation is bound by residues aspartate 70, glutamate 101, and histidine 104. Residue tyrosine 108 is part of the active site. Fe cation is bound by residues glutamate 163, glutamate 197, and histidine 200. The tract at residues phenylalanine 313–phenylalanine 319 is interaction with R1.

This sequence belongs to the ribonucleoside diphosphate reductase small chain family. In terms of assembly, interacts with RNR1/OPG080 subunit. Can interact with host RNR1 supunit. It depends on Fe cation as a cofactor.

The enzyme catalyses a 2'-deoxyribonucleoside 5'-diphosphate + [thioredoxin]-disulfide + H2O = a ribonucleoside 5'-diphosphate + [thioredoxin]-dithiol. In terms of biological role, ribonucleoside-diphosphate reductase holoenzyme provides the precursors necessary for viral DNA synthesis. Allows virus growth in non-dividing cells. Catalyzes the biosynthesis of deoxyribonucleotides from the corresponding ribonucleotides. In Vaccinia virus (strain Copenhagen) (VACV), this protein is Ribonucleoside-diphosphate reductase small chain (OPG048).